Reading from the N-terminus, the 615-residue chain is DNA mismatch repair protein MutL (615 aa).

The interval 362-397 (HFAEPAVREPVAPRYSPAPASGGRPAASWPNAQPGY) is disordered. Positions 378–391 (PAPASGGRPAASWP) are enriched in low complexity.

Belongs to the DNA mismatch repair MutL/HexB family.

Functionally, this protein is involved in the repair of mismatches in DNA. It is required for dam-dependent methyl-directed DNA mismatch repair. May act as a 'molecular matchmaker', a protein that promotes the formation of a stable complex between two or more DNA-binding proteins in an ATP-dependent manner without itself being part of a final effector complex. This is DNA mismatch repair protein MutL from Escherichia fergusonii (strain ATCC 35469 / DSM 13698 / CCUG 18766 / IAM 14443 / JCM 21226 / LMG 7866 / NBRC 102419 / NCTC 12128 / CDC 0568-73).